The following is a 241-amino-acid chain: Uracil-DNA glycosylase (241 aa).

The active-site Proton acceptor is aspartate 73.

Belongs to the uracil-DNA glycosylase (UDG) superfamily. UNG family.

It is found in the cytoplasm. The enzyme catalyses Hydrolyzes single-stranded DNA or mismatched double-stranded DNA and polynucleotides, releasing free uracil.. Functionally, excises uracil residues from the DNA which can arise as a result of misincorporation of dUMP residues by DNA polymerase or due to deamination of cytosine. This chain is Uracil-DNA glycosylase, found in Agrobacterium fabrum (strain C58 / ATCC 33970) (Agrobacterium tumefaciens (strain C58)).